The primary structure comprises 200 residues: Probable GTP-binding protein EngB (200 aa).

The 178-residue stretch at 22 to 199 (NVAEVAFLGR…QDKITGYLFG (178 aa)) folds into the EngB-type G domain. GTP is bound by residues 30-37 (GRSNVGKS), 57-61 (GKTQL), 85-88 (DLPG), 155-158 (TKID), and 177-180 (FLSN). Mg(2+)-binding residues include S37 and T59.

The protein belongs to the TRAFAC class TrmE-Era-EngA-EngB-Septin-like GTPase superfamily. EngB GTPase family. Mg(2+) serves as cofactor.

In terms of biological role, necessary for normal cell division and for the maintenance of normal septation. The polypeptide is Probable GTP-binding protein EngB (Aliarcobacter butzleri (strain RM4018) (Arcobacter butzleri)).